We begin with the raw amino-acid sequence, 561 residues long: 3-hydroxy-3-methylglutaryl-coenzyme A reductase 3 (561 aa).

2 helical membrane passes run 25-45 (PIRHTNLIFSALFAASLAYLM) and 69-89 (IFGLVASLIYLLSFFGIAFVQ). Residues 90–145 (SIVSSSDDEEEDFLVGPARGSSAAAAVAPPPPPSSPAQCSLLGSPHDDAARERMPE) form a linker region. Positions 113–146 (AAAVAPPPPPSSPAQCSLLGSPHDDAARERMPEE) are disordered. Residues 134 to 143 (PHDDAARERM) are compositionally biased toward basic and acidic residues. The tract at residues 146 to 561 (EDEEIVSSVV…SSKDMSKVIS (416 aa)) is catalytic. Glu-240 serves as the catalytic Charge relay system. Asn-304 carries N-linked (GlcNAc...) asparagine glycosylation. Catalysis depends on charge relay system residues Lys-372 and Asp-448. His-546 acts as the Proton donor in catalysis. Asn-550 carries an N-linked (GlcNAc...) asparagine glycan.

The protein belongs to the HMG-CoA reductase family.

The protein localises to the endoplasmic reticulum membrane. The enzyme catalyses (R)-mevalonate + 2 NADP(+) + CoA = (3S)-3-hydroxy-3-methylglutaryl-CoA + 2 NADPH + 2 H(+). It functions in the pathway metabolic intermediate biosynthesis; (R)-mevalonate biosynthesis; (R)-mevalonate from acetyl-CoA: step 3/3. Catalyzes the synthesis of mevalonate. The specific precursor of all isoprenoid compounds present in plants. This is 3-hydroxy-3-methylglutaryl-coenzyme A reductase 3 (HMG3) from Oryza sativa subsp. japonica (Rice).